The chain runs to 614 residues: DNA repair protein rad26 (614 aa).

Residues 29-43 (QAQTQVQAQSSQVVV) show a composition bias toward low complexity. 2 disordered regions span residues 29-76 (QAQT…QASL) and 157-214 (KKMK…TAED). Polar residues-rich tracts occupy residues 50-76 (QNLN…QASL) and 181-190 (LLSSSDQLAK). Residues 191 to 207 (STKHAAKNSPSKKKRKT) are compositionally biased toward basic residues.

In terms of assembly, interacts with cds1.

It is found in the nucleus. Functionally, involved in cell cycle arrest when DNA synthesis is inhibited by hydroxyurea, and in mitosis arrest after treatment with DNA-damaging agents. This protein is S phase-specific. This Schizosaccharomyces pombe (strain 972 / ATCC 24843) (Fission yeast) protein is DNA repair protein rad26 (rad26).